A 452-amino-acid chain; its full sequence is UDP-N-acetylmuramoylalanine--D-glutamate ligase (452 aa).

An ATP-binding site is contributed by 119–125; sequence GSNGKTT.

This sequence belongs to the MurCDEF family.

Its subcellular location is the cytoplasm. It carries out the reaction UDP-N-acetyl-alpha-D-muramoyl-L-alanine + D-glutamate + ATP = UDP-N-acetyl-alpha-D-muramoyl-L-alanyl-D-glutamate + ADP + phosphate + H(+). Its pathway is cell wall biogenesis; peptidoglycan biosynthesis. Functionally, cell wall formation. Catalyzes the addition of glutamate to the nucleotide precursor UDP-N-acetylmuramoyl-L-alanine (UMA). The protein is UDP-N-acetylmuramoylalanine--D-glutamate ligase of Streptococcus pyogenes serotype M5 (strain Manfredo).